We begin with the raw amino-acid sequence, 209 residues long: Ribonuclease HII (209 aa).

Positions 5-202 (SMTLGIDEAG…KNRILNPKLL (198 aa)) constitute an RNase H type-2 domain. A divalent metal cation contacts are provided by Asp11, Glu12, and Asp108.

The protein belongs to the RNase HII family. The cofactor is Mn(2+). Requires Mg(2+) as cofactor.

It is found in the cytoplasm. It catalyses the reaction Endonucleolytic cleavage to 5'-phosphomonoester.. Functionally, endonuclease that specifically degrades the RNA of RNA-DNA hybrids. The polypeptide is Ribonuclease HII (rnhB) (Helicobacter pylori (strain J99 / ATCC 700824) (Campylobacter pylori J99)).